Consider the following 287-residue polypeptide: Diaminopimelate epimerase (287 aa).

Residues N13, Q46, and N66 each contribute to the substrate site. C75 functions as the Proton donor in the catalytic mechanism. Residues 76–77 (GN), N166, N199, and 217–218 (ER) contribute to the substrate site. Residue C226 is the Proton acceptor of the active site. 227–228 (GT) is a substrate binding site.

Belongs to the diaminopimelate epimerase family. As to quaternary structure, homodimer.

It is found in the cytoplasm. The enzyme catalyses (2S,6S)-2,6-diaminopimelate = meso-2,6-diaminopimelate. Its pathway is amino-acid biosynthesis; L-lysine biosynthesis via DAP pathway; DL-2,6-diaminopimelate from LL-2,6-diaminopimelate: step 1/1. In terms of biological role, catalyzes the stereoinversion of LL-2,6-diaminopimelate (L,L-DAP) to meso-diaminopimelate (meso-DAP), a precursor of L-lysine and an essential component of the bacterial peptidoglycan. In Paraburkholderia xenovorans (strain LB400), this protein is Diaminopimelate epimerase.